A 422-amino-acid chain; its full sequence is Glucuronoxylanase XynC (422 aa).

Positions 1–32 (MIPRIKKTICVLLVCFTMLSVMLGPGATEVLA) are cleaved as a signal peptide. Glu-171 (proton donor) is an active-site residue. The active-site Nucleophile is the Glu-260.

Belongs to the glycosyl hydrolase 30 family.

Its subcellular location is the secreted. The catalysed reaction is Endohydrolysis of (1-&gt;4)-beta-D-xylosyl links in some glucuronoarabinoxylans.. It functions in the pathway glycan degradation; xylan degradation. Catalyzes the depolymerization of methylglucuronoxylan (MeGAXn) from different sources. It cleaves the beta-1,4-xylosidic bond penultimate to that linking carbon one of the xylose residue substituted with alpha-1,2-linked 4-O-methyl-D-glucuronate (MeGA). This chain is Glucuronoxylanase XynC (xynC), found in Bacillus subtilis (strain 168).